Consider the following 791-residue polypeptide: Phenylalanine--tRNA ligase beta subunit (791 aa).

The 111-residue stretch at 39 to 149 (GDEIQNVVTG…SDTAIGKDIK (111 aa)) folds into the tRNA-binding domain. Residues 403 to 478 (IKERNLKVDS…RIYGYNNIPT (76 aa)) form the B5 domain. Mg(2+) is bound by residues D456, D462, E465, and E466. The region spanning 698-791 (PKFPAVDRDM…LENNLGAELR (94 aa)) is the FDX-ACB domain.

The protein belongs to the phenylalanyl-tRNA synthetase beta subunit family. Type 1 subfamily. As to quaternary structure, tetramer of two alpha and two beta subunits. The cofactor is Mg(2+).

The protein localises to the cytoplasm. It catalyses the reaction tRNA(Phe) + L-phenylalanine + ATP = L-phenylalanyl-tRNA(Phe) + AMP + diphosphate + H(+). The protein is Phenylalanine--tRNA ligase beta subunit of Clostridium tetani (strain Massachusetts / E88).